A 184-amino-acid polypeptide reads, in one-letter code: Photosystem I assembly protein Ycf4 (184 aa).

2 helical membrane passes run 22 to 42 (FCWAFILFLGSLGFLLVGTSS) and 57 to 77 (IIFFPQGIVMSFYGIAGLFIS).

It belongs to the Ycf4 family.

It is found in the plastid. It localises to the chloroplast thylakoid membrane. Seems to be required for the assembly of the photosystem I complex. The protein is Photosystem I assembly protein Ycf4 of Crucihimalaya wallichii (Rock-cress).